Reading from the N-terminus, the 484-residue chain is uncharacterized protein (484 aa).

In terms of domain architecture, FAD-binding PCMH-type spans 47-226 (TLPIPAAVVK…TEVTVKIFKF (180 aa)).

Belongs to the FAD-binding oxidoreductase/transferase type 4 family.

This is an uncharacterized protein from Escherichia coli O157:H7.